Here is a 223-residue protein sequence, read N- to C-terminus: Endonuclease V (223 aa).

Mg(2+)-binding residues include Asp-35 and Asp-103.

The protein belongs to the endonuclease V family. Requires Mg(2+) as cofactor.

It localises to the cytoplasm. It carries out the reaction Endonucleolytic cleavage at apurinic or apyrimidinic sites to products with a 5'-phosphate.. In terms of biological role, DNA repair enzyme involved in the repair of deaminated bases. Selectively cleaves double-stranded DNA at the second phosphodiester bond 3' to a deoxyinosine leaving behind the intact lesion on the nicked DNA. The sequence is that of Endonuclease V from Shigella dysenteriae serotype 1 (strain Sd197).